A 125-amino-acid chain; its full sequence is Fluoride-specific ion channel FluC (125 aa).

2 helical membrane passes run 4 to 24 and 34 to 54; these read LWVA…GVWI and YGTF…LTVL. 2 residues coordinate Na(+): Gly74 and Thr77. Residues 99-119 traverse the membrane as a helical segment; it reads VLYFGSSLALGILAVWLGMVV.

This sequence belongs to the fluoride channel Fluc/FEX (TC 1.A.43) family.

The protein localises to the cell inner membrane. It catalyses the reaction fluoride(in) = fluoride(out). Na(+) is not transported, but it plays an essential structural role and its presence is essential for fluoride channel function. Its function is as follows. Fluoride-specific ion channel. Important for reducing fluoride concentration in the cell, thus reducing its toxicity. The protein is Fluoride-specific ion channel FluC of Acidobacterium capsulatum (strain ATCC 51196 / DSM 11244 / BCRC 80197 / JCM 7670 / NBRC 15755 / NCIMB 13165 / 161).